Here is a 555-residue protein sequence, read N- to C-terminus: CTP synthase (555 aa).

The interval 1 to 267 (MTKFVFVTGG…AQQVLKFMHL (267 aa)) is amidoligase domain. Position 13 (Ser13) interacts with CTP. Ser13 serves as a coordination point for UTP. ATP contacts are provided by residues 14–19 (SIGKGI) and Asp71. Residues Asp71 and Glu141 each contribute to the Mg(2+) site. CTP is bound by residues 148–150 (DIE), 188–193 (KTKPTQ), and Lys224. UTP is bound by residues 188-193 (KTKPTQ) and Lys224. ATP is bound at residue Ala242. The Glutamine amidotransferase type-1 domain maps to 299 to 535 (YVQLSDAYLS…VGACLADNGN (237 aa)). Gly354 lines the L-glutamine pocket. Cys381 functions as the Nucleophile; for glutamine hydrolysis in the catalytic mechanism. L-glutamine is bound by residues 382 to 385 (LGMQ), Glu405, and Arg463. Residues His508 and Glu510 contribute to the active site. The interval 536-555 (NANHHDSTPAEPLVSEPLSS) is disordered.

The protein belongs to the CTP synthase family. Homotetramer.

It catalyses the reaction UTP + L-glutamine + ATP + H2O = CTP + L-glutamate + ADP + phosphate + 2 H(+). It carries out the reaction L-glutamine + H2O = L-glutamate + NH4(+). The enzyme catalyses UTP + NH4(+) + ATP = CTP + ADP + phosphate + 2 H(+). Its pathway is pyrimidine metabolism; CTP biosynthesis via de novo pathway; CTP from UDP: step 2/2. With respect to regulation, allosterically activated by GTP, when glutamine is the substrate; GTP has no effect on the reaction when ammonia is the substrate. The allosteric effector GTP functions by stabilizing the protein conformation that binds the tetrahedral intermediate(s) formed during glutamine hydrolysis. Inhibited by the product CTP, via allosteric rather than competitive inhibition. In terms of biological role, catalyzes the ATP-dependent amination of UTP to CTP with either L-glutamine or ammonia as the source of nitrogen. Regulates intracellular CTP levels through interactions with the four ribonucleotide triphosphates. This chain is CTP synthase, found in Acaryochloris marina (strain MBIC 11017).